Reading from the N-terminus, the 447-residue chain is Probable alpha-galactosidase B (447 aa).

The first 25 residues, 1–25, serve as a signal peptide directing secretion; sequence MTTFFSLTTAAAVLTLARGSNALVR. 2 cysteine pairs are disulfide-bonded: Cys45–Cys77 and Cys127–Cys157. Catalysis depends on Asp155, which acts as the Nucleophile. Asn162 and Asn180 each carry an N-linked (GlcNAc...) asparagine glycan. 225–229 lines the substrate pocket; it reads EWGQA. The N-linked (GlcNAc...) asparagine glycan is linked to Asn236. Asp247 (proton donor) is an active-site residue. An N-linked (GlcNAc...) asparagine glycan is attached at Asn286.

The protein belongs to the glycosyl hydrolase 27 family.

It is found in the secreted. The enzyme catalyses Hydrolysis of terminal, non-reducing alpha-D-galactose residues in alpha-D-galactosides, including galactose oligosaccharides, galactomannans and galactolipids.. Hydrolyzes a variety of simple alpha-D-galactoside as well as more complex molecules such as oligosaccharides and polysaccharides. In Aspergillus fumigatus (strain ATCC MYA-4609 / CBS 101355 / FGSC A1100 / Af293) (Neosartorya fumigata), this protein is Probable alpha-galactosidase B (aglB).